Reading from the N-terminus, the 73-residue chain is Large ribosomal subunit protein bL31 (73 aa).

4 residues coordinate Zn(2+): cysteine 16, cysteine 18, cysteine 38, and cysteine 41.

This sequence belongs to the bacterial ribosomal protein bL31 family. Type A subfamily. In terms of assembly, part of the 50S ribosomal subunit. Requires Zn(2+) as cofactor.

Binds the 23S rRNA. This chain is Large ribosomal subunit protein bL31, found in Vibrio vulnificus (strain YJ016).